Here is a 148-residue protein sequence, read N- to C-terminus: Macrodomain Ter protein (148 aa).

This sequence belongs to the MatP family. As to quaternary structure, homodimer.

Its subcellular location is the cytoplasm. Functionally, required for spatial organization of the terminus region of the chromosome (Ter macrodomain) during the cell cycle. Prevents early segregation of duplicated Ter macrodomains during cell division. Binds specifically to matS, which is a 13 bp signature motif repeated within the Ter macrodomain. The polypeptide is Macrodomain Ter protein (Haemophilus influenzae (strain 86-028NP)).